A 217-amino-acid polypeptide reads, in one-letter code: Guanylate kinase (217 aa).

One can recognise a Guanylate kinase-like domain in the interval 10–190 (GLLIILSSPS…TEEALKTIIT (181 aa)). Residue 17-24 (SPSGAGKS) participates in ATP binding.

It belongs to the guanylate kinase family.

The protein localises to the cytoplasm. The catalysed reaction is GMP + ATP = GDP + ADP. Essential for recycling GMP and indirectly, cGMP. This Ruegeria sp. (strain TM1040) (Silicibacter sp.) protein is Guanylate kinase.